The primary structure comprises 179 residues: CASP-like protein 5A2 (179 aa).

The interval 1–24 (MNVSHASVHPVEDPPAAATEVENP) is disordered. Over 1 to 38 (MNVSHASVHPVEDPPAAATEVENPPRVRMDDMEGMPGT) the chain is Cytoplasmic. Residues 39 to 59 (LLGLALRFFQFLFAAAALCVM) form a helical membrane-spanning segment. Topologically, residues 60–70 (ASTSDFPSVTA) are extracellular. Residues 71 to 91 (FCYLVAATGLQSLWSLALAMV) form a helical membrane-spanning segment. Residues 92–115 (DVYAIMVKRSLQNRRLVSLFAIGD) lie on the Cytoplasmic side of the membrane. The helical transmembrane segment at 116–136 (GVTSTLTFAAACASAGITVLI) threads the bilayer. Residues 137 to 155 (DNDLNSCAQNHCVQFETST) lie on the Extracellular side of the membrane. Residues 156 to 176 (ALAFISWFAALPSFLFNFWSL) traverse the membrane as a helical segment. Topologically, residues 177-179 (ASR) are cytoplasmic.

This sequence belongs to the Casparian strip membrane proteins (CASP) family. In terms of assembly, homodimer and heterodimers.

Its subcellular location is the cell membrane. The protein is CASP-like protein 5A2 of Arabidopsis thaliana (Mouse-ear cress).